Reading from the N-terminus, the 873-residue chain is Alanine--tRNA ligase (873 aa).

Positions 563, 567, 665, and 669 each coordinate Zn(2+).

Belongs to the class-II aminoacyl-tRNA synthetase family. The cofactor is Zn(2+).

The protein localises to the cytoplasm. It carries out the reaction tRNA(Ala) + L-alanine + ATP = L-alanyl-tRNA(Ala) + AMP + diphosphate. Functionally, catalyzes the attachment of alanine to tRNA(Ala) in a two-step reaction: alanine is first activated by ATP to form Ala-AMP and then transferred to the acceptor end of tRNA(Ala). Also edits incorrectly charged Ser-tRNA(Ala) and Gly-tRNA(Ala) via its editing domain. The chain is Alanine--tRNA ligase from Parabacteroides distasonis (strain ATCC 8503 / DSM 20701 / CIP 104284 / JCM 5825 / NCTC 11152).